Here is a 277-residue protein sequence, read N- to C-terminus: Phosphate import ATP-binding protein PstB (277 aa).

In terms of domain architecture, ABC transporter spans 31-272 (IEVPGLSLYY…PAKKQTEDYI (242 aa)). ATP is bound at residue 63 to 70 (GPSGCGKS).

It belongs to the ABC transporter superfamily. Phosphate importer (TC 3.A.1.7) family. The complex is composed of two ATP-binding proteins (PstB), two transmembrane proteins (PstC and PstA) and a solute-binding protein (PstS).

The protein resides in the cell inner membrane. The catalysed reaction is phosphate(out) + ATP + H2O = ADP + 2 phosphate(in) + H(+). Functionally, part of the ABC transporter complex PstSACB involved in phosphate import. Responsible for energy coupling to the transport system. This Pseudomonas fluorescens (strain ATCC BAA-477 / NRRL B-23932 / Pf-5) protein is Phosphate import ATP-binding protein PstB.